Here is a 690-residue protein sequence, read N- to C-terminus: Protein hook (690 aa).

The 117-residue stretch at 6 to 122 folds into the Calponin-homology (CH) domain; that stretch reads MEIYESLIRW…RLLQLILGCA (117 aa). Coiled-coil stretches lie at residues 134 to 515 and 546 to 577; these read QIME…HHAE and ETTQHQLSNLHTKIANLEAALVVKDQELQAAD.

It belongs to the hook family. As to quaternary structure, homodimer. Interacts with microtubules via its N-terminus.

The protein resides in the cytoplasm. Its subcellular location is the cytoskeleton. It localises to the endosome. Its function is as follows. Involved in endocytic trafficking. Probably acts as a cytoskeletal linker protein that tethers endosome vesicles to the cytoskeleton. The sequence is that of Protein hook from Anopheles gambiae (African malaria mosquito).